We begin with the raw amino-acid sequence, 299 residues long: YjeF N-terminal domain-containing protein 3 (299 aa).

A YjeF N-terminal domain is found at Ala74 to Leu287.

Interacts with APOA1. Binds to HDL. Expressed in theca cells in ovary and in Leydig cells in testis (at protein level). Also expressed in brain and mammary gland.

Functionally, may accelerate cholesterol efflux from endothelial cells to high-density lipoprotein (HDL) and thereby regulates angiogenesis. May orchestrate hematopoietic stem and progenitor cell emergence from the hemogenic endothelium, a type of specialized endothelium manifesting hematopoietic potential. YJEFN3-mediated cholesterol efflux activates endothelial SREBF2, the master transcription factor for cholesterol biosynthesis, which in turn transactivates NOTCH and promotes hematopoietic stem and progenitor cell emergence. May play a role in spermiogenesis and oogenesis. This Homo sapiens (Human) protein is YjeF N-terminal domain-containing protein 3 (YJEFN3).